We begin with the raw amino-acid sequence, 330 residues long: Glycerol-3-phosphate dehydrogenase [NAD(P)+] (330 aa).

NADPH-binding residues include Ser10, Trp11, Arg31, and Lys105. Sn-glycerol 3-phosphate-binding residues include Lys105, Gly135, and Ser137. NADPH is bound at residue Ala139. The sn-glycerol 3-phosphate site is built by Lys190, Asp243, Ser253, Arg254, and Asn255. Catalysis depends on Lys190, which acts as the Proton acceptor. Arg254 contributes to the NADPH binding site. Val278 and Glu280 together coordinate NADPH.

Belongs to the NAD-dependent glycerol-3-phosphate dehydrogenase family.

It localises to the cytoplasm. It catalyses the reaction sn-glycerol 3-phosphate + NAD(+) = dihydroxyacetone phosphate + NADH + H(+). It carries out the reaction sn-glycerol 3-phosphate + NADP(+) = dihydroxyacetone phosphate + NADPH + H(+). Its pathway is membrane lipid metabolism; glycerophospholipid metabolism. In terms of biological role, catalyzes the reduction of the glycolytic intermediate dihydroxyacetone phosphate (DHAP) to sn-glycerol 3-phosphate (G3P), the key precursor for phospholipid synthesis. The protein is Glycerol-3-phosphate dehydrogenase [NAD(P)+] of Nitratidesulfovibrio vulgaris (strain DP4) (Desulfovibrio vulgaris).